The primary structure comprises 292 residues: Protease HtpX homolog (292 aa).

Transmembrane regions (helical) follow at residues 4 to 24 and 39 to 59; these read ILLFVLTNLAVVLVLGVVASL and GALLGFALVMGFGGAFISLLI. Histidine 144 contacts Zn(2+). Glutamate 145 is an active-site residue. Histidine 148 lines the Zn(2+) pocket. The next 2 helical transmembrane spans lie at 159-179 and 199-219; these read LIQGVMNTFVVFLSRVIGYAV and VTTIVLDIALGFVAAIIVAWF. Glutamate 224 contributes to the Zn(2+) binding site.

Belongs to the peptidase M48B family. It depends on Zn(2+) as a cofactor.

It is found in the cell inner membrane. This chain is Protease HtpX homolog, found in Verminephrobacter eiseniae (strain EF01-2).